We begin with the raw amino-acid sequence, 120 residues long: Peptidyl-tRNA hydrolase (120 aa).

This sequence belongs to the PTH2 family.

The protein localises to the cytoplasm. The catalysed reaction is an N-acyl-L-alpha-aminoacyl-tRNA + H2O = an N-acyl-L-amino acid + a tRNA + H(+). Its function is as follows. The natural substrate for this enzyme may be peptidyl-tRNAs which drop off the ribosome during protein synthesis. This is Peptidyl-tRNA hydrolase from Sulfolobus acidocaldarius (strain ATCC 33909 / DSM 639 / JCM 8929 / NBRC 15157 / NCIMB 11770).